A 235-amino-acid polypeptide reads, in one-letter code: Putative homeobox-leucine zipper protein ATHB-51 (235 aa).

The homeobox DNA-binding region spans 74 to 133 (EMIKKKRLTSGQLASLERSFQEEIKLDSDRKVKLSRELGLQPRQIAVWFQNRRARWKAKQ). The segment at 134-162 (LEQLYDSLRQEYDVVSREKQMLHDEVKKL) is leucine-zipper.

The protein belongs to the HD-ZIP homeobox family. Class I subfamily. In terms of tissue distribution, widely expressed.

The protein resides in the nucleus. Putative transcription factor. This is Putative homeobox-leucine zipper protein ATHB-51 (ATHB-51) from Arabidopsis thaliana (Mouse-ear cress).